The primary structure comprises 178 residues: ATP synthase subunit delta (178 aa).

It belongs to the ATPase delta chain family. As to quaternary structure, F-type ATPases have 2 components, F(1) - the catalytic core - and F(0) - the membrane proton channel. F(1) has five subunits: alpha(3), beta(3), gamma(1), delta(1), epsilon(1). F(0) has three main subunits: a(1), b(2) and c(10-14). The alpha and beta chains form an alternating ring which encloses part of the gamma chain. F(1) is attached to F(0) by a central stalk formed by the gamma and epsilon chains, while a peripheral stalk is formed by the delta and b chains.

The protein localises to the cell membrane. Its function is as follows. F(1)F(0) ATP synthase produces ATP from ADP in the presence of a proton or sodium gradient. F-type ATPases consist of two structural domains, F(1) containing the extramembraneous catalytic core and F(0) containing the membrane proton channel, linked together by a central stalk and a peripheral stalk. During catalysis, ATP synthesis in the catalytic domain of F(1) is coupled via a rotary mechanism of the central stalk subunits to proton translocation. In terms of biological role, this protein is part of the stalk that links CF(0) to CF(1). It either transmits conformational changes from CF(0) to CF(1) or is implicated in proton conduction. This chain is ATP synthase subunit delta, found in Streptococcus equinus (Streptococcus bovis).